A 105-amino-acid chain; its full sequence is Large ribosomal subunit protein uL24 (105 aa).

Belongs to the universal ribosomal protein uL24 family. As to quaternary structure, part of the 50S ribosomal subunit.

Its function is as follows. One of two assembly initiator proteins, it binds directly to the 5'-end of the 23S rRNA, where it nucleates assembly of the 50S subunit. In terms of biological role, one of the proteins that surrounds the polypeptide exit tunnel on the outside of the subunit. In Dictyoglomus turgidum (strain DSM 6724 / Z-1310), this protein is Large ribosomal subunit protein uL24.